A 180-amino-acid chain; its full sequence is Inorganic pyrophosphatase (180 aa).

Residues lysine 30, arginine 44, and tyrosine 56 each coordinate substrate. Mg(2+) contacts are provided by aspartate 66, aspartate 71, and aspartate 103. Tyrosine 142 is a substrate binding site.

The protein belongs to the PPase family. As to quaternary structure, homohexamer. Requires Mg(2+) as cofactor.

Its subcellular location is the cytoplasm. The catalysed reaction is diphosphate + H2O = 2 phosphate + H(+). Its function is as follows. Catalyzes the hydrolysis of inorganic pyrophosphate (PPi) forming two phosphate ions. The protein is Inorganic pyrophosphatase of Buchnera aphidicola subsp. Schizaphis graminum (strain Sg).